A 229-amino-acid chain; its full sequence is Mannose-specific lectin TAR1 (229 aa).

An N-terminal signal peptide occupies residues 1–23; sequence MAKLLLFLLPAILGLLIPRSAVA. Bulb-type lectin domains lie at 26–131 and 145–229; these read TNYL…PWVP and DNLL…DYVL. Residues 51 to 55, Y59, W63, Q64, 170 to 174, Y178, and 182 to 185 each bind beta-D-mannose; these read QNDCN, QGDCN, and YGWQ. The Carbohydrate-binding motif 1 motif lies at 51-59; that stretch reads QNDCNLVLY. Intrachain disulfides connect C54/C74 and C173/C195. The Carbohydrate-binding motif 2 signature appears at 170-178; that stretch reads QGDCNLVLY.

In terms of assembly, forms heterotetramer of 2 chains 1 and 2 chains 2 arranged as a dimer of chain 1 and chain 2 heterodimers.

It localises to the secreted. Functionally, mannose-specific lectin. Shows agglutinating activity towards erythrocytes from rabbit. The sequence is that of Mannose-specific lectin TAR1 from Colocasia esculenta (Wild taro).